Here is a 74-residue protein sequence, read N- to C-terminus: Large ribosomal subunit protein bL31 (74 aa).

Cysteine 16, cysteine 18, cysteine 38, and cysteine 41 together coordinate Zn(2+).

Belongs to the bacterial ribosomal protein bL31 family. Type A subfamily. Part of the 50S ribosomal subunit. Zn(2+) serves as cofactor.

Its function is as follows. Binds the 23S rRNA. This is Large ribosomal subunit protein bL31 from Mycolicibacterium vanbaalenii (strain DSM 7251 / JCM 13017 / BCRC 16820 / KCTC 9966 / NRRL B-24157 / PYR-1) (Mycobacterium vanbaalenii).